Reading from the N-terminus, the 174-residue chain is Shikimate kinase (174 aa).

15 to 20 (GTGKST) is an ATP binding site. Mg(2+) is bound at residue serine 19. Residues aspartate 37, arginine 61, and glycine 82 each contribute to the substrate site. Residue arginine 120 coordinates ATP. Arginine 138 is a binding site for substrate.

This sequence belongs to the shikimate kinase family. Monomer. Mg(2+) is required as a cofactor.

Its subcellular location is the cytoplasm. The enzyme catalyses shikimate + ATP = 3-phosphoshikimate + ADP + H(+). The protein operates within metabolic intermediate biosynthesis; chorismate biosynthesis; chorismate from D-erythrose 4-phosphate and phosphoenolpyruvate: step 5/7. Its function is as follows. Catalyzes the specific phosphorylation of the 3-hydroxyl group of shikimic acid using ATP as a cosubstrate. In Staphylococcus aureus (strain Mu3 / ATCC 700698), this protein is Shikimate kinase.